Consider the following 106-residue polypeptide: Iron-sulfur cluster assembly protein CyaY (106 aa).

It belongs to the frataxin family.

In terms of biological role, involved in iron-sulfur (Fe-S) cluster assembly. May act as a regulator of Fe-S biogenesis. The chain is Iron-sulfur cluster assembly protein CyaY from Escherichia coli O6:H1 (strain CFT073 / ATCC 700928 / UPEC).